Here is a 259-residue protein sequence, read N- to C-terminus: Adenosylcobinamide-GDP ribazoletransferase (259 aa).

6 consecutive transmembrane segments (helical) span residues 27–47, 51–71, 100–120, 124–144, 175–195, and 219–239; these read ITFL…ILYI, FSHL…NGLN, VGAG…LSLA, LYIG…SMMI, FLAI…VIVA, and VIGF…IIIA.

This sequence belongs to the CobS family. Mg(2+) serves as cofactor.

It is found in the cell membrane. The catalysed reaction is alpha-ribazole + adenosylcob(III)inamide-GDP = adenosylcob(III)alamin + GMP + H(+). It catalyses the reaction alpha-ribazole 5'-phosphate + adenosylcob(III)inamide-GDP = adenosylcob(III)alamin 5'-phosphate + GMP + H(+). It participates in cofactor biosynthesis; adenosylcobalamin biosynthesis; adenosylcobalamin from cob(II)yrinate a,c-diamide: step 7/7. In terms of biological role, joins adenosylcobinamide-GDP and alpha-ribazole to generate adenosylcobalamin (Ado-cobalamin). Also synthesizes adenosylcobalamin 5'-phosphate from adenosylcobinamide-GDP and alpha-ribazole 5'-phosphate. The polypeptide is Adenosylcobinamide-GDP ribazoletransferase (Thermoplasma volcanium (strain ATCC 51530 / DSM 4299 / JCM 9571 / NBRC 15438 / GSS1)).